A 303-amino-acid chain; its full sequence is MEFWGLEVKPGSTVKCEPGHGFILHVSQAALGESKKSDSALMYVKVDDKKLAIGTLSIDKYPQIQFDLVFNKEFELSHTSKTTSVFFSGYKVEQPIEGDEMDLDSEDEEEELNIPVIKENGKADGKEEQKNQEKAVAATASKSSLGLEKKSKDDSDDSDEDESDDSDEDDSDDSDEGEGLSPDEGDDDSSDEDDTSDDDEEETPTPKKPEAGKKRGAENALKTPLSDKKAKVATPPAQKTGGKKGATHVATPHPAKGKTPANNDKLTEKSPKSGGSVPCKSCSKTFNSEMALQAHSKAKHGAK.

Acidic residues predominate over residues 100–112 (EMDLDSEDEEEEL). Positions 100–282 (EMDLDSEDEE…SGGSVPCKSC (183 aa)) are disordered. A compositionally biased stretch (basic and acidic residues) spans 119-133 (ENGKADGKEEQKNQE). The segment covering 154–203 (DSDDSDEDESDDSDEDDSDDSDEGEGLSPDEGDDDSSDEDDTSDDDEEET) has biased composition (acidic residues). The segment covering 204-217 (PTPKKPEAGKKRGA) has biased composition (basic and acidic residues). Residues 277–300 (VPCKSCSKTFNSEMALQAHSKAKH) form a C2H2-type zinc finger.

This sequence belongs to the histone deacetylase HD2 family. As to quaternary structure, multimer. Possibly forms a homotrimer with HDT1 and/or HDT3.

The protein resides in the nucleus. The protein localises to the nucleolus. Mediates the deacetylation of lysine residues on the N-terminal part of the core histones (H2A, H2B, H3 and H4). Histone deacetylation gives a tag for epigenetic repression and plays an important role in transcriptional regulation, cell cycle progression and developmental events. This chain is Histone deacetylase HDT2 (HDT2), found in Zea mays (Maize).